We begin with the raw amino-acid sequence, 208 residues long: FMN-dependent NADH:quinone oxidoreductase 1 (208 aa).

Belongs to the azoreductase type 1 family. In terms of assembly, homodimer. FMN serves as cofactor.

The enzyme catalyses 2 a quinone + NADH + H(+) = 2 a 1,4-benzosemiquinone + NAD(+). The catalysed reaction is N,N-dimethyl-1,4-phenylenediamine + anthranilate + 2 NAD(+) = 2-(4-dimethylaminophenyl)diazenylbenzoate + 2 NADH + 2 H(+). In terms of biological role, quinone reductase that provides resistance to thiol-specific stress caused by electrophilic quinones. Its function is as follows. Also exhibits azoreductase activity. Catalyzes the reductive cleavage of the azo bond in aromatic azo compounds to the corresponding amines. This chain is FMN-dependent NADH:quinone oxidoreductase 1, found in Bacillus cereus (strain ATCC 14579 / DSM 31 / CCUG 7414 / JCM 2152 / NBRC 15305 / NCIMB 9373 / NCTC 2599 / NRRL B-3711).